Reading from the N-terminus, the 333-residue chain is DNA-directed RNA polymerase subunit alpha (333 aa).

The tract at residues 1–246 (MKKMVQIKYK…AHLQVIGDVK (246 aa)) is alpha N-terminal domain (alpha-NTD). The interval 262–333 (VEPSIHSVDI…YNVTLNRGEK (72 aa)) is alpha C-terminal domain (alpha-CTD).

This sequence belongs to the RNA polymerase alpha chain family. As to quaternary structure, homodimer. The RNAP catalytic core consists of 2 alpha, 1 beta, 1 beta' and 1 omega subunit. When a sigma factor is associated with the core the holoenzyme is formed, which can initiate transcription.

The enzyme catalyses RNA(n) + a ribonucleoside 5'-triphosphate = RNA(n+1) + diphosphate. In terms of biological role, DNA-dependent RNA polymerase catalyzes the transcription of DNA into RNA using the four ribonucleoside triphosphates as substrates. This Mycoplasmopsis pulmonis (strain UAB CTIP) (Mycoplasma pulmonis) protein is DNA-directed RNA polymerase subunit alpha.